A 523-amino-acid polypeptide reads, in one-letter code: Pentatricopeptide repeat-containing protein At3g21470 (523 aa).

13 PPR repeats span residues 10–43 (GEFHVSNLIKNHISRGSPIQALVLYGGIRRRGVY), 44–79 (FPGWVPLILRACACVVPRVVLGKLLHSESIKFGVCS), 80–114 (DVMVGSSLISMYGKCGCVVSARKVFDEMPERNVAT), 115–141 (WNAMIGGYMSNGDAVLASGLFEEISVC), 143–173 (NTVTWIEMIKGYGKRIEIEKARELFERMPFE), 176–210 (NVKAWSVMLGVYVNNRKMEDARKFFEDIPEKNAFV), 211–237 (WSLMMSGYFRIGDVHEARAIFYRVFAR), 238–272 (DLVIWNTLIAGYAQNGYSDDAIDAFFNMQGEGYEP), 273–307 (DAVTVSSILSACAQSGRLDVGREVHSLINHRGIEL), 308–338 (NQFVSNALIDMYAKCGDLENATSVFESISVR), 339–373 (SVACCNSMISCLAIHGKGKEALEMFSTMESLDLKP), 374–408 (DEITFIAVLTACVHGGFLMEGLKIFSEMKTQDVKP), and 409–439 (NVKHFGCLIHLLGRSGKLKEAYRLVKEMHVK). Residues 444–523 (VLGALLGACK…SPGLSSLVLT (80 aa)) are type E motif.

Belongs to the PPR family. PCMP-E subfamily.

This Arabidopsis thaliana (Mouse-ear cress) protein is Pentatricopeptide repeat-containing protein At3g21470 (PCMP-E29).